Here is a 746-residue protein sequence, read N- to C-terminus: Lysine-specific histone demethylase 1 homolog 2 (746 aa).

The interval 1-26 (MNSPASDETAPRRNRRKVSRKNYDEN) is disordered. Positions 51 to 152 (EKETETEALI…FGVSPLFAPY (102 aa)) constitute an SWIRM domain. The FAD site is built by glutamate 189, arginine 191, arginine 197, and glutamate 569.

It belongs to the flavin monoamine oxidase family. FAD serves as cofactor. In terms of tissue distribution, expressed in the shoot and root apical regions of young seedlings. Expressed in inflorescences.

Functionally, probable histone demethylase that reduces the levels of histone H3 'Lys-4' methylation in chromatin of the floral repressor FLOWERING LOCUS C (FLC) and the sporophytically silenced floral repressor FWA. Seems to act in partial redundancy with FLOWERING LOCUS D (FLD) to repress FLC expression. Required for cytosine methylation of FWA. Controls primary seed dormancy by regulating DOG1 and abscisic acid signaling-related genes. The polypeptide is Lysine-specific histone demethylase 1 homolog 2 (Arabidopsis thaliana (Mouse-ear cress)).